The following is a 938-amino-acid chain: Isoleucine--tRNA ligase (938 aa).

The short motif at 58–68 (PYANGHIHLGT) is the 'HIGH' region element. Glutamate 565 is a binding site for L-isoleucyl-5'-AMP. Positions 606–610 (KMSKS) match the 'KMSKS' region motif. Lysine 609 contacts ATP. Positions 905, 908, 925, and 928 each coordinate Zn(2+).

This sequence belongs to the class-I aminoacyl-tRNA synthetase family. IleS type 1 subfamily. As to quaternary structure, monomer. It depends on Zn(2+) as a cofactor.

The protein localises to the cytoplasm. The catalysed reaction is tRNA(Ile) + L-isoleucine + ATP = L-isoleucyl-tRNA(Ile) + AMP + diphosphate. Catalyzes the attachment of isoleucine to tRNA(Ile). As IleRS can inadvertently accommodate and process structurally similar amino acids such as valine, to avoid such errors it has two additional distinct tRNA(Ile)-dependent editing activities. One activity is designated as 'pretransfer' editing and involves the hydrolysis of activated Val-AMP. The other activity is designated 'posttransfer' editing and involves deacylation of mischarged Val-tRNA(Ile). The protein is Isoleucine--tRNA ligase of Nitratidesulfovibrio vulgaris (strain DSM 19637 / Miyazaki F) (Desulfovibrio vulgaris).